The following is a 694-amino-acid chain: Glycine--tRNA ligase beta subunit (694 aa).

Belongs to the class-II aminoacyl-tRNA synthetase family. Tetramer of two alpha and two beta subunits.

Its subcellular location is the cytoplasm. The catalysed reaction is tRNA(Gly) + glycine + ATP = glycyl-tRNA(Gly) + AMP + diphosphate. This Acidithiobacillus ferrooxidans (strain ATCC 23270 / DSM 14882 / CIP 104768 / NCIMB 8455) (Ferrobacillus ferrooxidans (strain ATCC 23270)) protein is Glycine--tRNA ligase beta subunit.